Reading from the N-terminus, the 831-residue chain is DNA ligase (831 aa).

NAD(+) is bound by residues 34-38, 83-84, and glutamate 114; these read DADYD and SL. The N6-AMP-lysine intermediate role is filled by lysine 116. The NAD(+) site is built by arginine 137, glutamate 174, lysine 291, and lysine 315. Residues cysteine 409, cysteine 412, cysteine 427, and cysteine 433 each contribute to the Zn(2+) site. A BRCT domain is found at 749 to 831; that stretch reads AHTAPLNGQS…LDFLEQYSAQ (83 aa).

It belongs to the NAD-dependent DNA ligase family. LigA subfamily. Requires Mg(2+) as cofactor. It depends on Mn(2+) as a cofactor.

The enzyme catalyses NAD(+) + (deoxyribonucleotide)n-3'-hydroxyl + 5'-phospho-(deoxyribonucleotide)m = (deoxyribonucleotide)n+m + AMP + beta-nicotinamide D-nucleotide.. DNA ligase that catalyzes the formation of phosphodiester linkages between 5'-phosphoryl and 3'-hydroxyl groups in double-stranded DNA using NAD as a coenzyme and as the energy source for the reaction. It is essential for DNA replication and repair of damaged DNA. In Xylella fastidiosa (strain M12), this protein is DNA ligase.